A 247-amino-acid polypeptide reads, in one-letter code: Caffeoyl-CoA O-methyltransferase (247 aa).

Lys21 contacts substrate. S-adenosyl-L-methionine-binding positions include Thr63, Glu85, Gly87 to Val88, Ser93, Asp111, and Ala140. Residue Asp163 coordinates substrate. Residue Asp163 coordinates a divalent metal cation. S-adenosyl-L-methionine is bound at residue Asp165. 2 residues coordinate a divalent metal cation: Asp189 and Asn190. Asn194 is a substrate binding site.

Belongs to the class I-like SAM-binding methyltransferase superfamily. Cation-dependent O-methyltransferase family. CCoAMT subfamily. Requires a divalent metal cation as cofactor.

It carries out the reaction (E)-caffeoyl-CoA + S-adenosyl-L-methionine = (E)-feruloyl-CoA + S-adenosyl-L-homocysteine + H(+). The protein operates within aromatic compound metabolism; phenylpropanoid biosynthesis. Functionally, methylates caffeoyl-CoA to feruloyl-CoA and 5-hydroxyferuloyl-CoA to sinapoyl-CoA. Plays a role in the synthesis of feruloylated polysaccharides. Involved in the reinforcement of the plant cell wall. Also involved in the responding to wounding or pathogen challenge by the increased formation of cell wall-bound ferulic acid polymers. The protein is Caffeoyl-CoA O-methyltransferase of Populus tremuloides (Quaking aspen).